The following is a 149-amino-acid chain: Nucleoside diphosphate kinase (149 aa).

Positions 9, 57, 85, 91, 102, and 112 each coordinate ATP. The active-site Pros-phosphohistidine intermediate is His115.

This sequence belongs to the NDK family. As to quaternary structure, homotetramer. Requires Mg(2+) as cofactor.

The protein localises to the cytoplasm. It carries out the reaction a 2'-deoxyribonucleoside 5'-diphosphate + ATP = a 2'-deoxyribonucleoside 5'-triphosphate + ADP. The enzyme catalyses a ribonucleoside 5'-diphosphate + ATP = a ribonucleoside 5'-triphosphate + ADP. In terms of biological role, major role in the synthesis of nucleoside triphosphates other than ATP. The ATP gamma phosphate is transferred to the NDP beta phosphate via a ping-pong mechanism, using a phosphorylated active-site intermediate. This Trichodesmium erythraeum (strain IMS101) protein is Nucleoside diphosphate kinase.